We begin with the raw amino-acid sequence, 167 residues long: Translationally-controlled tumor protein homolog (167 aa).

The TCTP domain occupies M1–I167.

This sequence belongs to the TCTP family.

It localises to the cytoplasm. It is found in the cytoskeleton. Functionally, involved in protein synthesis. Involved in microtubule stabilization. The sequence is that of Translationally-controlled tumor protein homolog from Debaryomyces hansenii (strain ATCC 36239 / CBS 767 / BCRC 21394 / JCM 1990 / NBRC 0083 / IGC 2968) (Yeast).